The chain runs to 83 residues: uncharacterized protein (83 aa).

It localises to the plastid. The protein localises to the chloroplast. This is an uncharacterized protein from Pinus thunbergii (Japanese black pine).